Here is a 1725-residue protein sequence, read N- to C-terminus: Latrophilin Cirl (1725 aa).

At 1–757 (MALNELGNCA…LFTMFDGNMR (757 aa)) the chain is on the extracellular side. An SUEL-type lectin domain is found at 18–107 (ACEGKQLTIE…KYLEAHYQCI (90 aa)). Asparagine 135 carries an N-linked (GlcNAc...) asparagine glycan. Positions 164-284 (AVQPTHSTPS…SAANNSVNIG (121 aa)) are disordered. Low complexity-rich tracts occupy residues 167-176 (PTHSTPSSST) and 224-236 (SSSS…SAGN). Residues asparagine 236, asparagine 278, asparagine 326, asparagine 388, asparagine 645, asparagine 693, and asparagine 720 are each glycosylated (N-linked (GlcNAc...) asparagine). The segment covering 259–282 (LLTTKSSPNRTPGTTASAANNSVN) has biased composition (polar residues). Positions 361-390 (DDEYDDDLPAASSTTPQPSNNGGDCVHNSS) are disordered. Over residues 371–390 (ASSTTPQPSNNGGDCVHNSS) the composition is skewed to polar residues. In terms of domain architecture, GAIN-B spans 551–744 (RNVVQKVKNI…AILMDVVDEH (194 aa)). Disulfide bonds link cysteine 699–cysteine 726 and cysteine 714–cysteine 728. The interval 699-744 (CVFWNYIDHAWSANGCSLESTNRTHSVCSCNHLTNFAILMDVVDEH) is GPS. A helical transmembrane segment spans residues 758–778 (IFIYISVAICVVFIIIALLTL). Over 779–791 (KLFNGVFVKSART) the chain is Cytoplasmic. A helical membrane pass occupies residues 792 to 812 (SIYSSIYICLLAIELLFLLGI). The Extracellular portion of the chain corresponds to 813-818 (EQTETS). Residues 819-839 (IFCGFITVFLHCAILSGTAWF) form a helical membrane-spanning segment. The Cytoplasmic segment spans residues 840–865 (CYEAFHSYSTLTSDELLLEVDQTPKV). Residues 866 to 886 (NCYYLLSYGLSLSVVAISLVI) traverse the membrane as a helical segment. At 887-910 (DPSTYTQNDYCVLMEANALFYSTF) the chain is on the extracellular side. A helical membrane pass occupies residues 911-931 (VAPVLIFFVAAITYTFLSWII). Residues 932–958 (MRRKSRTALKTKEHTRLANVRFDIRCS) are Cytoplasmic-facing. A helical membrane pass occupies residues 959–979 (FVFLLLLSVVWCCAYFYLRGA). Topologically, residues 980–986 (KLDEDGA) are extracellular. A helical transmembrane segment spans residues 987 to 1007 (PIYGYCFICFNTLLGIYIFVF). The Cytoplasmic segment spans residues 1008 to 1725 (HCIQNEKIRR…VRCYLEPLAK (718 aa)). A disordered region spans residues 1056-1088 (TANQSAGTLSKSKSKLPLGAGDEARDGDAQQQQ). The residue at position 1153 (serine 1153) is a Phosphoserine. Disordered stretches follow at residues 1236–1263 (HNNQ…LHSR), 1309–1337 (QQLQ…AEQH), 1472–1555 (GGGS…SDER), and 1636–1705 (LFGH…QARH). Basic residues predominate over residues 1237 to 1246 (NNQHGKKKRG). Serine 1255 and serine 1262 each carry phosphoserine. Positions 1309–1327 (QQLQQQQLRQQRQQQQQQL) are enriched in low complexity. Serine 1328 and serine 1329 each carry phosphoserine. Over residues 1478–1496 (GGSVTSRSQQQQQQQLKQK) the composition is skewed to low complexity. Acidic residues-rich tracts occupy residues 1505-1522 (DDDD…DEVT) and 1532-1543 (CDDEDNESDIDD). Polar residues predominate over residues 1651–1666 (QTPAQKRQQLQKLSPQ). The segment covering 1667 to 1683 (STTSSSSHTSHSNPQHA) has biased composition (low complexity). Residues 1684-1693 (PAHHLQHHHT) are compositionally biased toward basic residues. Positions 1694-1705 (QQQQQQQQQARH) are enriched in low complexity.

The protein belongs to the G-protein coupled receptor 2 family. LN-TM7 subfamily. As to quaternary structure, forms a heterodimer, consisting of a large extracellular region non-covalently linked to a seven-transmembrane moiety. Post-translationally, proteolytically cleaved into 2 subunits, an extracellular subunit and a seven-transmembrane subunit.

Its subcellular location is the cell membrane. In Drosophila mojavensis (Fruit fly), this protein is Latrophilin Cirl.